Here is a 663-residue protein sequence, read N- to C-terminus: Polyunsaturated fatty acid lipoxygenase ALOX15 (663 aa).

Positions 2 to 115 constitute a PLAT domain; sequence GVYRIRVSTG…ILSLPEGTGC (114 aa). The Lipoxygenase domain maps to 116–663; the sequence is TVVEDSQGLF…PSMVENSVAI (548 aa). Serine 149 is subject to Phosphoserine. Positions 361, 366, 541, 545, and 663 each coordinate Fe cation.

The protein belongs to the lipoxygenase family. In terms of assembly, interacts with PEBP1; in response to IL13/interleukin-13, prevents the interaction of PEBP1 with RAF1 to activate the ERK signaling cascade. The cofactor is Fe cation. As to expression, detected in leukocytes, lung and aorta.

It localises to the cytoplasm. The protein resides in the cytosol. Its subcellular location is the cell membrane. The protein localises to the lipid droplet. The catalysed reaction is (5Z,8Z,11Z,14Z)-eicosatetraenoate + O2 = (12S)-hydroperoxy-(5Z,8Z,10E,14Z)-eicosatetraenoate. The enzyme catalyses (5Z,8Z,11Z,14Z)-eicosatetraenoate + O2 = (15S)-hydroperoxy-(5Z,8Z,11Z,13E)-eicosatetraenoate. It carries out the reaction (9Z,12Z)-octadecadienoate + O2 = (13S)-hydroperoxy-(9Z,11E)-octadecadienoate. It catalyses the reaction (12S)-hydroperoxy-(5Z,8Z,10E,14Z)-eicosatetraenoate = (8S)-hydroxy-(11S,12S)-epoxy-(5Z,9E,14Z)-eicosatrienoate. The catalysed reaction is (5Z,8Z,11Z,14Z)-eicosatetraenoate + 2 O2 = (14R,15S)-dihydroperoxy-(5Z,8Z,10E,12E)-eicosatetraenoate. The enzyme catalyses (5Z,8Z,11Z,14Z)-eicosatetraenoate + 2 O2 = (8S,15S)-dihydroperoxy-(5Z,9E,11Z,13E)-eicosatetraenoate. It carries out the reaction (14S,15R)-epoxy-(5Z,8Z,11Z)-eicosatrienoate + O2 = (8S)-hydroperoxy-(14S,15R)-epoxy-(5Z,9E,11Z)-eicosatrienoate. It catalyses the reaction (14S,15R)-epoxy-(5Z,8Z,11Z)-eicosatrienoate + O2 = (12S)-hydroperoxy-(14S,15R)-epoxy-(5Z,8Z,10E)-eicosatrienoate. The catalysed reaction is (14R,15S)-epoxy-(5Z,8Z,11Z)-eicosatrienoate + O2 = (5S)-hydroperoxy-(14R,15S)-epoxy-(6E,8Z,11Z)-eicosatrienoate. The enzyme catalyses (14R,15S)-epoxy-(5Z,8Z,11Z)-eicosatrienoate + O2 = (12S)-hydroperoxy-(14R,15S)-epoxy-(5Z,8Z,10E)-eicosatrienoate. It carries out the reaction (15R)-hydroperoxy-(5Z,8Z,11Z,13E)-eicosatetraenoate = 15-oxo-(5Z,8Z,11Z,13E)-eicosatetraenoate + H2O. It catalyses the reaction (15S)-hydroperoxy-(5Z,8Z,11Z,13E)-eicosatetraenoate = (14S,15S)-epoxy-(5Z,8Z,10E,12E)-eicosatetraenoate + H2O. The catalysed reaction is (4Z,7Z,10Z,13Z,16Z)-docosapentaenoate + O2 = 14-hydroperoxy-(4Z,7Z,10Z,12E,16Z)-docosapentaenoate. The enzyme catalyses (7Z,10Z,13Z,16Z,19Z)-docosapentaenoate + O2 = 14-hydroperoxy-(7Z,10Z,12E,16Z,19Z)-docosapentaenoate. It carries out the reaction (4Z,7Z,10Z,13Z,16Z,19Z)-docosahexaenoate + O2 = (14S)-hydroperoxy-(4Z,7Z,10Z,12E,16Z,19Z)-docosahexaenoate. It catalyses the reaction (4Z,7Z,10Z,13Z,16Z,19Z)-docosahexaenoate + O2 = (17S)-hydroperoxy-(4Z,7Z,10Z,13Z,15E,19Z)-docosahexaenoate. The catalysed reaction is (7S)-hydroperoxy-(4Z,8E,10Z,13Z,16Z,19Z)-docosahexaenoate + O2 = (7S,14S)-dihydroperoxy-(4Z,8E,10Z,12E,16Z,19Z)-docosahexaenoate. The enzyme catalyses (7S)-hydroperoxy-(4Z,8E,10Z,13Z,16Z,19Z)-docosahexaenoate + O2 = (7S,17S)-dihydroperoxy-(4Z,8E,10Z,13Z,15E,19Z)-docosahexaenoate. It carries out the reaction (4Z,7Z,10Z,13Z,16Z,19Z)-docosahexaenoate + O2 = (11S)-hydroperoxy-(4Z,7Z,9E,13Z,16Z,19Z)-docosahexaenoate. It catalyses the reaction N-(5Z,8Z,11Z,14Z)-eicosatetraenoyl-taurine + O2 = N-(12S)-hydroperoxy-(5Z,8Z,10E,14Z)-eicosatetraenoyl-taurine. The catalysed reaction is N-(5Z,8Z,11Z,14Z)-eicosatetraenoyl-gamma-aminobutanoate + O2 = N-(12S)-hydroperoxy-(5Z,8Z,10E,14Z)-eicosatetraenoyl-gamma-aminobutanoate. The enzyme catalyses N-(5Z,8Z,11Z,14Z)-eicosatetraenoyl-glycine + O2 = N-(12S)-hydroperoxy-(5Z,8Z,10E,14Z)-eicosatetraenoyl-glycine. It carries out the reaction N-(5Z,8Z,11Z,14Z)-eicosatetraenoyl-L-alanine + O2 = N-(12S)-hydroperoxy-(5Z,8Z,10E,14Z)-eicosatetraenoyl-alanine. It catalyses the reaction N-(5Z,8Z,11Z,14Z)-eicosatetraenoyl-taurine + O2 = N-(15S)-hydroperoxy-(5Z,8Z,11Z,13E)-eicosatetraenoyl-taurine. The catalysed reaction is N-(5Z,8Z,11Z,14Z)-eicosatetraenoyl-gamma-aminobutanoate + O2 = N-(15S)-hydroperoxy-(5Z,8Z,11Z,13E)-eicosatetraenoyl-gamma-aminobutanoate. The enzyme catalyses N-(5Z,8Z,11Z,14Z)-eicosatetraenoyl-glycine + O2 = N-(15S)-hydroperoxy-(5Z,8Z,11Z,13E)-eicosatetraenoyl-glycine. It carries out the reaction N-(5Z,8Z,11Z,14Z)-eicosatetraenoyl-L-alanine + O2 = N-(15S)-hydroperoxy-(5Z,8Z,11Z,13E)-eicosatetraenoyl-alanine. It participates in lipid metabolism; hydroperoxy eicosatetraenoic acid biosynthesis. Functionally, non-heme iron-containing dioxygenase that catalyzes the stereo-specific peroxidation of free and esterified polyunsaturated fatty acids generating a spectrum of bioactive lipid mediators. It inserts peroxyl groups at C12 or C15 of arachidonate ((5Z,8Z,11Z,14Z)-eicosatetraenoate) producing both 12-hydroperoxyeicosatetraenoate/12-HPETE and 15-hydroperoxyeicosatetraenoate/15-HPETE. It may then act on 12-HPETE to produce hepoxilins, which may show pro-inflammatory properties. Can also peroxidize linoleate ((9Z,12Z)-octadecadienoate) to 13-hydroperoxyoctadecadienoate. May participate in the sequential oxidations of DHA ((4Z,7Z,10Z,13Z,16Z,19Z)-docosahexaenoate) to generate specialized pro-resolving mediators (SPMs)like resolvin D5 ((7S,17S)-diHPDHA) and (7S,14S)-diHPDHA, that actively down-regulate the immune response and have anti-aggregation properties with platelets. Can convert epoxy fatty acids to hydroperoxy-epoxides derivatives followed by an intramolecular nucleophilic substitution leading to the formation of monocyclic endoperoxides. Plays an important role during the maintenance of self-tolerance by peroxidizing membrane-bound phosphatidylethanolamine which can then signal the sorting process for clearance of apoptotic cells during inflammation and prevent an autoimmune response. In addition to its role in the immune and inflammatory responses, this enzyme may play a role in epithelial wound healing in the cornea through production of lipoxin A4 (LXA(4)) and docosahexaenoic acid-derived neuroprotectin D1 (NPD1; 10R,17S-HDHA), both lipid autacoids exhibit anti-inflammatory and neuroprotective properties. Furthermore, it may regulate actin polymerization which is crucial for several biological processes such as the phagocytosis of apoptotic cells. It is also implicated in the generation of endogenous ligands for peroxisome proliferator activated receptor (PPAR-gamma), hence modulating macrophage development and function. It may also exert a negative effect on skeletal development by regulating bone mass through this pathway. As well as participates in ER stress and downstream inflammation in adipocytes, pancreatic islets, and liver. Finally, it is also involved in the cellular response to IL13/interleukin-13. This is Polyunsaturated fatty acid lipoxygenase ALOX15 from Rattus norvegicus (Rat).